Here is a 74-residue protein sequence, read N- to C-terminus: Mitochondrial import receptor subunit TOM6 homolog (74 aa).

Low complexity predominate over residues 1–14 (MASSGAGVTAAGSA). Residues 1 to 24 (MASSGAGVTAAGSANEAPEIPDNV) are disordered. An N-acetylalanine modification is found at Ala2.

The protein belongs to the Tom6 family. As to quaternary structure, forms part of the preprotein translocase complex of the outer mitochondrial membrane (TOM complex) which consists of at least 7 different proteins (TOMM5, TOMM6, TOMM7, TOMM20, TOMM22, TOMM40 and TOMM70).

The protein resides in the mitochondrion outer membrane. This is Mitochondrial import receptor subunit TOM6 homolog (TOMM6) from Bos taurus (Bovine).